The following is a 465-amino-acid chain: UPF0422 protein CBU_0937 (465 aa).

The N-terminal stretch at 1–23 is a signal peptide; sequence MTSKLVISALGLCVSGALSTTLA. The stretch at 28–60 forms a coiled coil; sequence TTNQQITKRIDYLQAQINELRTQQKKERQKKKA.

This sequence belongs to the UPF0422 family.

The polypeptide is UPF0422 protein CBU_0937 (Coxiella burnetii (strain RSA 493 / Nine Mile phase I)).